Consider the following 330-residue polypeptide: CRISPR-associated endonuclease Cas1 2 (330 aa).

Residues E156, H222, and E237 each contribute to the Mn(2+) site.

It belongs to the CRISPR-associated endonuclease Cas1 family. Homodimer, forms a heterotetramer with a Cas2 homodimer. Mg(2+) is required as a cofactor. The cofactor is Mn(2+).

Functionally, CRISPR (clustered regularly interspaced short palindromic repeat), is an adaptive immune system that provides protection against mobile genetic elements (viruses, transposable elements and conjugative plasmids). CRISPR clusters contain spacers, sequences complementary to antecedent mobile elements, and target invading nucleic acids. CRISPR clusters are transcribed and processed into CRISPR RNA (crRNA). Acts as a dsDNA endonuclease. Involved in the integration of spacer DNA into the CRISPR cassette. In Thermodesulfovibrio yellowstonii (strain ATCC 51303 / DSM 11347 / YP87), this protein is CRISPR-associated endonuclease Cas1 2.